Here is a 212-residue protein sequence, read N- to C-terminus: Glycerol-3-phosphate acyltransferase (212 aa).

6 consecutive transmembrane segments (helical) span residues 6 to 26 (IAVL…GLIL), 56 to 76 (LAAL…LLAH), 92 to 112 (LTLI…WLGF), 122 to 142 (LGVS…AWLL), 150 to 170 (SSVG…FMPA), and 171 to 191 (SHEI…LLLW).

The protein belongs to the PlsY family. Probably interacts with PlsX.

Its subcellular location is the cell inner membrane. The enzyme catalyses an acyl phosphate + sn-glycerol 3-phosphate = a 1-acyl-sn-glycero-3-phosphate + phosphate. It participates in lipid metabolism; phospholipid metabolism. Its function is as follows. Catalyzes the transfer of an acyl group from acyl-phosphate (acyl-PO(4)) to glycerol-3-phosphate (G3P) to form lysophosphatidic acid (LPA). This enzyme utilizes acyl-phosphate as fatty acyl donor, but not acyl-CoA or acyl-ACP. The polypeptide is Glycerol-3-phosphate acyltransferase (Zymomonas mobilis subsp. mobilis (strain ATCC 31821 / ZM4 / CP4)).